A 142-amino-acid chain; its full sequence is SsrA-binding protein (142 aa).

It belongs to the SmpB family.

It localises to the cytoplasm. Its function is as follows. Required for rescue of stalled ribosomes mediated by trans-translation. Binds to transfer-messenger RNA (tmRNA), required for stable association of tmRNA with ribosomes. tmRNA and SmpB together mimic tRNA shape, replacing the anticodon stem-loop with SmpB. tmRNA is encoded by the ssrA gene; the 2 termini fold to resemble tRNA(Ala) and it encodes a 'tag peptide', a short internal open reading frame. During trans-translation Ala-aminoacylated tmRNA acts like a tRNA, entering the A-site of stalled ribosomes, displacing the stalled mRNA. The ribosome then switches to translate the ORF on the tmRNA; the nascent peptide is terminated with the 'tag peptide' encoded by the tmRNA and targeted for degradation. The ribosome is freed to recommence translation, which seems to be the essential function of trans-translation. The sequence is that of SsrA-binding protein from Mycoplasma mobile (strain ATCC 43663 / 163K / NCTC 11711) (Mesomycoplasma mobile).